Consider the following 366-residue polypeptide: Photosynthetic reaction center cytochrome c subunit (366 aa).

The first 22 residues, 1-22 (MALAVRISTLTVAVTAAALLAG), serve as a signal peptide directing secretion. A lipid anchor (N-palmitoyl cysteine) is attached at cysteine 23. Cysteine 23 is lipidated: S-diacylglycerol cysteine. Heme contacts are provided by methionine 94, cysteine 107, cysteine 110, histidine 111, methionine 129, histidine 143, cysteine 151, cysteine 154, histidine 155, methionine 238, cysteine 249, cysteine 252, histidine 253, cysteine 309, cysteine 312, and histidine 313.

Component of the photosynthetic reaction center composed of protein subunits L (PufL), M (PufM), H (PuhA) and cytochrome C (PufC). The reaction center interacts with light-harvesting antenna complex LH1. Binds 4 heme groups per subunit.

The protein localises to the cellular chromatophore membrane. Its function is as follows. The reaction center of purple bacteria contains a tightly bound cytochrome molecule which re-reduces the photo oxidized primary electron donor. The sequence is that of Photosynthetic reaction center cytochrome c subunit (pufC) from Rubrivivax gelatinosus (strain NBRC 100245 / IL144).